The primary structure comprises 291 residues: Ribosomal RNA small subunit methyltransferase A (291 aa).

6 residues coordinate S-adenosyl-L-methionine: histidine 21, leucine 23, glycine 48, glutamate 70, aspartate 95, and asparagine 115.

Belongs to the class I-like SAM-binding methyltransferase superfamily. rRNA adenine N(6)-methyltransferase family. RsmA subfamily.

Its subcellular location is the cytoplasm. The catalysed reaction is adenosine(1518)/adenosine(1519) in 16S rRNA + 4 S-adenosyl-L-methionine = N(6)-dimethyladenosine(1518)/N(6)-dimethyladenosine(1519) in 16S rRNA + 4 S-adenosyl-L-homocysteine + 4 H(+). Its function is as follows. Specifically dimethylates two adjacent adenosines (A1518 and A1519) in the loop of a conserved hairpin near the 3'-end of 16S rRNA in the 30S particle. May play a critical role in biogenesis of 30S subunits. This is Ribosomal RNA small subunit methyltransferase A from Prochlorococcus marinus (strain NATL2A).